A 284-amino-acid chain; its full sequence is Shikimate dehydrogenase (NADP(+)) (284 aa).

Shikimate-binding positions include 20 to 22 (SIS) and serine 67. Lysine 71 (proton acceptor) is an active-site residue. Shikimate-binding residues include asparagine 92 and aspartate 107. Residues 129–133 (GAGGA) and valine 227 contribute to the NADP(+) site. Tyrosine 229 contacts shikimate. Glycine 250 serves as a coordination point for NADP(+).

Belongs to the shikimate dehydrogenase family. As to quaternary structure, homodimer.

It carries out the reaction shikimate + NADP(+) = 3-dehydroshikimate + NADPH + H(+). It functions in the pathway metabolic intermediate biosynthesis; chorismate biosynthesis; chorismate from D-erythrose 4-phosphate and phosphoenolpyruvate: step 4/7. Functionally, involved in the biosynthesis of the chorismate, which leads to the biosynthesis of aromatic amino acids. Catalyzes the reversible NADPH linked reduction of 3-dehydroshikimate (DHSA) to yield shikimate (SA). In Streptococcus sanguinis (strain SK36), this protein is Shikimate dehydrogenase (NADP(+)).